The primary structure comprises 448 residues: Homogentisate 1,2-dioxygenase (448 aa).

The Proton acceptor role is filled by H303. Fe cation is bound by residues H346 and E352. Positions 361 and 382 each coordinate homogentisate. H382 contacts Fe cation.

The protein belongs to the homogentisate dioxygenase family. Hexamer; dimer of trimers. Fe cation is required as a cofactor.

It catalyses the reaction homogentisate + O2 = 4-maleylacetoacetate + H(+). The protein operates within amino-acid degradation; L-phenylalanine degradation; acetoacetate and fumarate from L-phenylalanine: step 4/6. In terms of biological role, involved in the catabolism of homogentisate (2,5-dihydroxyphenylacetate or 2,5-OH-PhAc), a central intermediate in the degradation of phenylalanine and tyrosine. Catalyzes the oxidative ring cleavage of the aromatic ring of homogentisate to yield maleylacetoacetate. The polypeptide is Homogentisate 1,2-dioxygenase (Rhodopseudomonas palustris (strain HaA2)).